Here is a 144-residue protein sequence, read N- to C-terminus: Large ribosomal subunit protein uL16 (144 aa).

This sequence belongs to the universal ribosomal protein uL16 family. Part of the 50S ribosomal subunit.

Functionally, binds 23S rRNA and is also seen to make contacts with the A and possibly P site tRNAs. The polypeptide is Large ribosomal subunit protein uL16 (Bacillus anthracis (strain A0248)).